A 165-amino-acid polypeptide reads, in one-letter code: Putative protein FAM86C1P (165 aa).

Belongs to the class I-like SAM-binding methyltransferase superfamily. EEF2KMT family. Interacts with EEF2KMT.

The protein is Putative protein FAM86C1P of Homo sapiens (Human).